The following is a 402-amino-acid chain: MESLVARFDALQEAILTHIESQDDTLESQIRYWENIRKENAIMHFARKQGLTKLGLQPLPTLAVTEYNAKQAIQIHLTLQSLLKSPYGSERWTLPEVSAELINTAPQNCLKKGGYDVSVWFDNDRYNAMVYTNWDYLYYQDVNEIWHKVKGEVDYDGLYFTDHTGERAYFTLFSTDAHRFSRTGLWTVHFKTQVISSSVVSSTNTPSFDFEEQQLPGPSTPTYTELTQASPCGRGKSRESQPTSTTSPETSGLRVRRGRRQRKSGPGPGETPSKRRRGGGRGGGETRLESAPSPGEVGIRHRTVERQGLSRLGQLQAEARDPPMILLKGTANSLKCWRYRKQNSSNCGFLFMSTVWNWVGDVSENHSRMLIAFKSPGQRDSFVKHNLFPKLCTYTYGSLNSL.

The transactivation domain stretch occupies residues 1–202 (MESLVARFDA…QVISSSVVSS (202 aa)). Residues 201–303 (SSTNTPSFDF…PGEVGIRHRT (103 aa)) are disordered. Residues 216 to 230 (PGPSTPTYTELTQAS) show a composition bias toward polar residues. The segment covering 240 to 253 (SQPTSTTSPETSGL) has biased composition (low complexity). Residues 254–263 (RVRRGRRQRK) show a composition bias toward basic residues. Residues 321 to 402 (DPPMILLKGT…TYTYGSLNSL (82 aa)) form a DNA-binding domain region. Lys-328 is covalently cross-linked (Glycyl lysine isopeptide (Lys-Gly) (interchain with G-Cter in SUMO)).

This sequence belongs to the papillomaviridae E2 protein family. As to quaternary structure, binds DNA as homodimer. Interacts with protein E1; this interaction greatly increases E1 DNA-binding activity. Interacts with protein L1; this interaction enhances E2-dependent replication and transcription activation. Interacts with protein L2; this interaction inhibits E2 transcriptional activity but not DNA replication function E2. Interacts with protein E7; this interaction inhibits E7 oncogenic activity. Interacts with host TAF1; this interaction modulates E2-dependent transcriptional regulation. Interacts with host BRD4; this interaction mediates E2 transcriptional activation function. Additionally, the interaction with host BRD4 on mitotic chromosomes mediates tethering of the viral genome. Interacts with host TOPBP1; this interaction is required for optimal viral DNA replication. Post-translationally, phosphorylated. In terms of processing, sumoylation plays a regulatory role in E2 transcriptional activity.

The protein localises to the host nucleus. Its function is as follows. Plays a role in the initiation of viral DNA replication. A dimer of E2 interacts with a dimer of E1 in order to improve specificity of E1 DNA binding activity. Once the complex recognizes and binds DNA at specific sites, the E2 dimer is removed from DNA. E2 also regulates viral transcription through binding to the E2RE response element (5'-ACCNNNNNNGGT-3') present in multiple copies in the regulatory regions of the viral genome. Activates or represses transcription depending on E2RE's position with regards to proximal promoter elements including the TATA-box. Repression occurs by sterically hindering the assembly of the transcription initiation complex. This chain is Regulatory protein E2, found in Human papillomavirus 65.